The sequence spans 367 residues: DNA replication and repair protein RecF (367 aa).

30 to 37 (GENAQGKT) serves as a coordination point for ATP.

Belongs to the RecF family.

Its subcellular location is the cytoplasm. Its function is as follows. The RecF protein is involved in DNA metabolism; it is required for DNA replication and normal SOS inducibility. RecF binds preferentially to single-stranded, linear DNA. It also seems to bind ATP. In Chlamydia caviae (strain ATCC VR-813 / DSM 19441 / 03DC25 / GPIC) (Chlamydophila caviae), this protein is DNA replication and repair protein RecF.